Reading from the N-terminus, the 505-residue chain is Protein disulfide-isomerase (505 aa).

The signal sequence occupies residues 1 to 20 (MHKAQKFALGLLAAAAVATA). Thioredoxin domains are found at residues 21–128 (SDVV…QSLP) and 335–465 (FVAG…ENGK). Catalysis depends on nucleophile residues Cys-50, Cys-53, Cys-385, and Cys-388. 2 disulfides stabilise this stretch: Cys-50–Cys-53 and Cys-385–Cys-388. The disordered stretch occupies residues 470–505 (ISEDAEETSSATETTTETATKSEEAAKETATEHDEL). Over residues 477–488 (TSSATETTTETA) the composition is skewed to low complexity. Over residues 489-505 (TKSEEAAKETATEHDEL) the composition is skewed to basic and acidic residues. Residues 502-505 (HDEL) carry the Prevents secretion from ER motif.

This sequence belongs to the protein disulfide isomerase family.

The protein resides in the endoplasmic reticulum lumen. It carries out the reaction Catalyzes the rearrangement of -S-S- bonds in proteins.. Participates in the folding of proteins containing disulfide bonds, may be involved in glycosylation, prolyl hydroxylation and triglyceride transfer. In Humicola insolens (Soft-rot fungus), this protein is Protein disulfide-isomerase.